Here is a 574-residue protein sequence, read N- to C-terminus: DNA mismatch repair protein MutL (574 aa).

It belongs to the DNA mismatch repair MutL/HexB family.

This protein is involved in the repair of mismatches in DNA. It is required for dam-dependent methyl-directed DNA mismatch repair. May act as a 'molecular matchmaker', a protein that promotes the formation of a stable complex between two or more DNA-binding proteins in an ATP-dependent manner without itself being part of a final effector complex. This Coxiella burnetii (strain RSA 331 / Henzerling II) protein is DNA mismatch repair protein MutL.